Consider the following 327-residue polypeptide: Endo-1,4-beta-xylanase C (327 aa).

A signal peptide spans methionine 1–alanine 15. A GH10 domain is found at threonine 43 to alanine 325. Glutamate 154 (proton donor) is an active-site residue. The active-site Nucleophile is the glutamate 262. Cysteine 280 and cysteine 286 are disulfide-bonded.

Belongs to the glycosyl hydrolase 10 (cellulase F) family.

It is found in the secreted. It catalyses the reaction Endohydrolysis of (1-&gt;4)-beta-D-xylosidic linkages in xylans.. It functions in the pathway glycan degradation; xylan degradation. With respect to regulation, weakly inhibited by the wheat xylanase inhibiting protein I (XIP-I). Endo-1,4-beta-xylanase involved in the hydrolysis of xylan, a major structural heterogeneous polysaccharide found in plant biomass representing the second most abundant polysaccharide in the biosphere, after cellulose. Plays an important role in causing fusarium head blight (FHB) on cereal crops. This chain is Endo-1,4-beta-xylanase C (XYLC), found in Gibberella zeae (strain ATCC MYA-4620 / CBS 123657 / FGSC 9075 / NRRL 31084 / PH-1) (Wheat head blight fungus).